The following is a 61-amino-acid chain: Rubredoxin 3 (61 aa).

Residues 1–53 form the Rubredoxin-like domain; that stretch reads MSSYRCPVCEYVYDESKGAPREGFPAGTPWDAVPDDWCCPDCGVREKLDFEPM. Cys6, Cys9, Cys39, and Cys42 together coordinate Fe cation.

The protein belongs to the rubredoxin family. Fe(3+) is required as a cofactor.

Involved in the hydrocarbon hydroxylating system, which transfers electrons from NADH to rubredoxin reductase and then through rubredoxin to alkane 1 monooxygenase. In Rhodococcus erythropolis (Arthrobacter picolinophilus), this protein is Rubredoxin 3 (rubA3).